Consider the following 338-residue polypeptide: Anthranilate phosphoribosyltransferase (338 aa).

5-phospho-alpha-D-ribose 1-diphosphate-binding positions include G78, 81-82, S86, 88-91, 106-114, and S118; these read GD, NIST, and KHGNKSITS. Position 78 (G78) interacts with anthranilate. Mg(2+) is bound at residue S90. N109 lines the anthranilate pocket. R163 provides a ligand contact to anthranilate. The Mg(2+) site is built by D222 and E223.

The protein belongs to the anthranilate phosphoribosyltransferase family. Homodimer. Mg(2+) is required as a cofactor.

It carries out the reaction N-(5-phospho-beta-D-ribosyl)anthranilate + diphosphate = 5-phospho-alpha-D-ribose 1-diphosphate + anthranilate. It participates in amino-acid biosynthesis; L-tryptophan biosynthesis; L-tryptophan from chorismate: step 2/5. Catalyzes the transfer of the phosphoribosyl group of 5-phosphorylribose-1-pyrophosphate (PRPP) to anthranilate to yield N-(5'-phosphoribosyl)-anthranilate (PRA). In Staphylococcus carnosus (strain TM300), this protein is Anthranilate phosphoribosyltransferase.